The primary structure comprises 201 residues: 3-isopropylmalate dehydratase small subunit (201 aa).

The protein belongs to the LeuD family. LeuD type 1 subfamily. Heterodimer of LeuC and LeuD.

The enzyme catalyses (2R,3S)-3-isopropylmalate = (2S)-2-isopropylmalate. The protein operates within amino-acid biosynthesis; L-leucine biosynthesis; L-leucine from 3-methyl-2-oxobutanoate: step 2/4. In terms of biological role, catalyzes the isomerization between 2-isopropylmalate and 3-isopropylmalate, via the formation of 2-isopropylmaleate. The protein is 3-isopropylmalate dehydratase small subunit of Rhodopseudomonas palustris (strain ATCC BAA-98 / CGA009).